A 342-amino-acid chain; its full sequence is Succinylglutamate desuccinylase (342 aa).

Zn(2+)-binding residues include H62, E65, and H158. E222 is a catalytic residue.

Belongs to the AspA/AstE family. Succinylglutamate desuccinylase subfamily. The cofactor is Zn(2+).

It carries out the reaction N-succinyl-L-glutamate + H2O = L-glutamate + succinate. The protein operates within amino-acid degradation; L-arginine degradation via AST pathway; L-glutamate and succinate from L-arginine: step 5/5. Functionally, transforms N(2)-succinylglutamate into succinate and glutamate. The chain is Succinylglutamate desuccinylase from Shewanella frigidimarina (strain NCIMB 400).